A 67-amino-acid polypeptide reads, in one-letter code: uncharacterized protein (67 aa).

The first 28 residues, 1-28 (MSHVSVIAARLLVWVGILLCLGVPQLWA), serve as a signal peptide directing secretion. Residue Asn39 is glycosylated (N-linked (GlcNAc...) asparagine; by host).

This is an uncharacterized protein from Invertebrate iridescent virus 3 (IIV-3).